The sequence spans 102 residues: NADH-quinone oxidoreductase subunit K 1 (102 aa).

3 consecutive transmembrane segments (helical) span residues 5 to 25 (LSHYLTVSAILFTLGVFGIFL), 31 to 51 (IVILMSVELILLAVNINMVAF), and 65 to 85 (LFILTVAAAEAAIGLAILVVF).

Belongs to the complex I subunit 4L family. As to quaternary structure, NDH-1 is composed of 14 different subunits. Subunits NuoA, H, J, K, L, M, N constitute the membrane sector of the complex.

It is found in the cell inner membrane. The enzyme catalyses a quinone + NADH + 5 H(+)(in) = a quinol + NAD(+) + 4 H(+)(out). Functionally, NDH-1 shuttles electrons from NADH, via FMN and iron-sulfur (Fe-S) centers, to quinones in the respiratory chain. The immediate electron acceptor for the enzyme in this species is believed to be ubiquinone. Couples the redox reaction to proton translocation (for every two electrons transferred, four hydrogen ions are translocated across the cytoplasmic membrane), and thus conserves the redox energy in a proton gradient. The sequence is that of NADH-quinone oxidoreductase subunit K 1 from Rhizobium etli (strain ATCC 51251 / DSM 11541 / JCM 21823 / NBRC 15573 / CFN 42).